Reading from the N-terminus, the 343-residue chain is Branched-chain-amino-acid aminotransferase (343 aa).

The residue at position 182 (K182) is an N6-(pyridoxal phosphate)lysine.

This sequence belongs to the class-IV pyridoxal-phosphate-dependent aminotransferase family. It depends on pyridoxal 5'-phosphate as a cofactor.

It carries out the reaction L-leucine + 2-oxoglutarate = 4-methyl-2-oxopentanoate + L-glutamate. The catalysed reaction is L-isoleucine + 2-oxoglutarate = (S)-3-methyl-2-oxopentanoate + L-glutamate. It catalyses the reaction L-valine + 2-oxoglutarate = 3-methyl-2-oxobutanoate + L-glutamate. The protein operates within amino-acid biosynthesis; L-isoleucine biosynthesis; L-isoleucine from 2-oxobutanoate: step 4/4. It participates in amino-acid biosynthesis; L-leucine biosynthesis; L-leucine from 3-methyl-2-oxobutanoate: step 4/4. It functions in the pathway amino-acid biosynthesis; L-valine biosynthesis; L-valine from pyruvate: step 4/4. In terms of biological role, acts on leucine, isoleucine and valine. In Haemophilus influenzae (strain ATCC 51907 / DSM 11121 / KW20 / Rd), this protein is Branched-chain-amino-acid aminotransferase (ilvE).